Here is a 348-residue protein sequence, read N- to C-terminus: Rhodopsin (348 aa).

Residue Met1 is modified to N-acetylmethionine. The Extracellular portion of the chain corresponds to Met1 to Gln36. Asn2 and Asn15 each carry an N-linked (GlcNAc...) asparagine glycan. A helical membrane pass occupies residues Phe37–Val61. Residues Thr62 to Asn73 lie on the Cytoplasmic side of the membrane. A helical transmembrane segment spans residues Tyr74–Tyr96. At Thr97–Cys110 the chain is on the extracellular side. Cys110 and Cys187 form a disulfide bridge. Residues Asn111–Ile133 traverse the membrane as a helical segment. The short motif at Glu134 to Tyr136 is the 'Ionic lock' involved in activated form stabilization element. Topologically, residues Glu134–His152 are cytoplasmic. A helical membrane pass occupies residues Ala153 to Val173. Residues Gly174–Ser202 are Extracellular-facing. Glu201 contacts Zn(2+). Residues Phe203 to Gly224 form a helical membrane-spanning segment. Residues Gln225–Arg252 are Cytoplasmic-facing. Residues Met253 to Tyr274 form a helical membrane-spanning segment. The Extracellular portion of the chain corresponds to Ile275–Ile286. Residue Gln279 coordinates Zn(2+). Residues Phe287 to Met308 form a helical membrane-spanning segment. The residue at position 296 (Lys296) is an N6-(retinylidene)lysine. At Leu309–Ala348 the chain is on the cytoplasmic side. S-palmitoyl cysteine attachment occurs at residues Cys322 and Cys323. Positions Asp330–Ala348 are interaction with SAG. Phosphoserine is present on Ser334. The residue at position 336 (Thr336) is a Phosphothreonine. At Ser338 the chain carries Phosphoserine. 2 positions are modified to phosphothreonine: Thr340 and Thr342. Ser343 is subject to Phosphoserine.

The protein belongs to the G-protein coupled receptor 1 family. Opsin subfamily. In terms of assembly, homodimer. May form a complex composed of RHO, GRK1 and RCVRN in a Ca(2+)-dependent manner; RCVRN prevents the interaction between GRK1 and RHO. Interacts with GRK1. Interacts (phosphorylated form) with SAG. Interacts with GNAT1. Interacts with GNAT3. SAG and G-proteins compete for a common binding site. Interacts with PRCD; the interaction promotes PRCD stability. Forms a complex with ASAP1 and ARF4. Forms a complex with ASAP1, RAB11A, Rabin8/RAB3IP, ARF4 and RAB11FIP3; the complex regulates Golgi-to-cilia rhodopsin/RHO transport in photoreceptors. Post-translationally, phosphorylated on some or all of the serine and threonine residues present in the C-terminal region. Contains one covalently linked retinal chromophore. Upon light absorption, the covalently bound 11-cis-retinal is converted to all-trans-retinal. After hydrolysis of the Schiff base and release of the covalently bound all-trans-retinal, active rhodopsin is regenerated by binding of a fresh molecule of 11-cis-retinal. Rod-shaped photoreceptor cells in the retina (at protein level).

The protein localises to the membrane. The protein resides in the cell projection. Its subcellular location is the cilium. It is found in the photoreceptor outer segment. Photoreceptor required for image-forming vision at low light intensity. Required for photoreceptor cell viability after birth. Light-induced isomerization of 11-cis to all-trans retinal triggers a conformational change that activates signaling via G-proteins. Subsequent receptor phosphorylation mediates displacement of the bound G-protein alpha subunit by the arrestin SAG and terminates signaling. The chain is Rhodopsin (Rho) from Mus musculus (Mouse).